The primary structure comprises 206 residues: Small ribosomal subunit protein uS4 (206 aa).

The region spanning 96-156 is the S4 RNA-binding domain; that stretch reads GRLDNVVYRM…EKAKKQSRVK (61 aa).

This sequence belongs to the universal ribosomal protein uS4 family. In terms of assembly, part of the 30S ribosomal subunit. Contacts protein S5. The interaction surface between S4 and S5 is involved in control of translational fidelity.

In terms of biological role, one of the primary rRNA binding proteins, it binds directly to 16S rRNA where it nucleates assembly of the body of the 30S subunit. Its function is as follows. With S5 and S12 plays an important role in translational accuracy. This is Small ribosomal subunit protein uS4 from Erwinia tasmaniensis (strain DSM 17950 / CFBP 7177 / CIP 109463 / NCPPB 4357 / Et1/99).